A 903-amino-acid polypeptide reads, in one-letter code: Translation initiation factor IF-2 (903 aa).

2 disordered regions span residues 57–171 (EKFK…QRRR) and 267–318 (PTPQ…EAVT). Residues 69-163 (KKEAKEPSEK…SEPQKPKESL (95 aa)) are compositionally biased toward basic and acidic residues. Residues 267–278 (PTPQPMQKTKQP) show a composition bias toward low complexity. Positions 299 to 308 (RRARKKHKKP) are enriched in basic residues. In terms of domain architecture, tr-type G spans 402 to 569 (PRAPVITIMG…IVLLQAEILE (168 aa)). Positions 411 to 418 (GHVDHGKT) are G1. GTP is bound at residue 411 to 418 (GHVDHGKT). Residues 436–440 (GITQH) are G2. The G3 stretch occupies residues 457-460 (DTPG). Residues 457–461 (DTPGH) and 511–514 (NKMD) each bind GTP. Positions 511-514 (NKMD) are G4. Positions 547–549 (SAK) are G5.

The protein belongs to the TRAFAC class translation factor GTPase superfamily. Classic translation factor GTPase family. IF-2 subfamily.

Its subcellular location is the cytoplasm. One of the essential components for the initiation of protein synthesis. Protects formylmethionyl-tRNA from spontaneous hydrolysis and promotes its binding to the 30S ribosomal subunits. Also involved in the hydrolysis of GTP during the formation of the 70S ribosomal complex. The protein is Translation initiation factor IF-2 of Campylobacter curvus (strain 525.92).